The following is a 317-amino-acid chain: Adenine deaminase (317 aa).

Histidine 14, histidine 16, and histidine 194 together coordinate Zn(2+). Glutamate 197 functions as the Proton donor in the catalytic mechanism. Aspartate 275 contributes to the Zn(2+) binding site. Aspartate 276 is a substrate binding site.

The protein belongs to the metallo-dependent hydrolases superfamily. Adenosine and AMP deaminases family. Adenine deaminase type 2 subfamily. Requires Zn(2+) as cofactor.

The enzyme catalyses adenine + H2O + H(+) = hypoxanthine + NH4(+). Functionally, catalyzes the hydrolytic deamination of adenine to hypoxanthine. Plays an important role in the purine salvage pathway and in nitrogen catabolism. This chain is Adenine deaminase, found in Bordetella bronchiseptica (strain ATCC BAA-588 / NCTC 13252 / RB50) (Alcaligenes bronchisepticus).